Here is an 83-residue protein sequence, read N- to C-terminus: Small ribosomal subunit protein bS16 (83 aa).

This sequence belongs to the bacterial ribosomal protein bS16 family.

The protein is Small ribosomal subunit protein bS16 of Shewanella woodyi (strain ATCC 51908 / MS32).